A 306-amino-acid chain; its full sequence is Pantothenate kinase (306 aa).

91–98 lines the ATP pocket; sequence GSVAVGKS.

The protein belongs to the prokaryotic pantothenate kinase family.

The protein resides in the cytoplasm. It carries out the reaction (R)-pantothenate + ATP = (R)-4'-phosphopantothenate + ADP + H(+). It functions in the pathway cofactor biosynthesis; coenzyme A biosynthesis; CoA from (R)-pantothenate: step 1/5. This Streptococcus pneumoniae (strain JJA) protein is Pantothenate kinase.